We begin with the raw amino-acid sequence, 297 residues long: 4-hydroxy-tetrahydrodipicolinate synthase (297 aa).

T49 contributes to the pyruvate binding site. Catalysis depends on Y137, which acts as the Proton donor/acceptor. The active-site Schiff-base intermediate with substrate is K166. A pyruvate-binding site is contributed by I208.

Belongs to the DapA family. In terms of assembly, homotetramer; dimer of dimers.

Its subcellular location is the cytoplasm. The enzyme catalyses L-aspartate 4-semialdehyde + pyruvate = (2S,4S)-4-hydroxy-2,3,4,5-tetrahydrodipicolinate + H2O + H(+). It participates in amino-acid biosynthesis; L-lysine biosynthesis via DAP pathway; (S)-tetrahydrodipicolinate from L-aspartate: step 3/4. Functionally, catalyzes the condensation of (S)-aspartate-beta-semialdehyde [(S)-ASA] and pyruvate to 4-hydroxy-tetrahydrodipicolinate (HTPA). The chain is 4-hydroxy-tetrahydrodipicolinate synthase from Porphyromonas gingivalis (strain ATCC 33277 / DSM 20709 / CIP 103683 / JCM 12257 / NCTC 11834 / 2561).